Here is a 173-residue protein sequence, read N- to C-terminus: Large ribosomal subunit protein uL22c (173 aa).

The protein belongs to the universal ribosomal protein uL22 family. In terms of assembly, part of the 50S ribosomal subunit.

It localises to the plastid. The protein resides in the chloroplast. Its function is as follows. This protein binds specifically to 23S rRNA. In terms of biological role, the globular domain of the protein is located near the polypeptide exit tunnel on the outside of the subunit, while an extended beta-hairpin is found that lines the wall of the exit tunnel in the center of the 70S ribosome. This Drimys granadensis protein is Large ribosomal subunit protein uL22c (rpl22).